Reading from the N-terminus, the 1119-residue chain is Putative transcription factor SEF1 (1119 aa).

Disordered stretches follow at residues 1–70 (MGDP…TQSR) and 86–105 (QNGE…SKGK). The span at 47 to 70 (LHTQQSYYGNGTDGASESALTQSR) shows a compositional bias: polar residues. A DNA-binding region (zn(2)-C6 fungal-type) is located at residues 118–148 (CTHCRQHKIKCNASEKFPAPCSRCERMGLHC). Disordered regions lie at residues 236–290 (QLLQ…PANT), 306–335 (SQQI…SSKQ), 894–913 (ASSS…TDTN), 926–962 (KKSS…AHNT), and 994–1018 (SADS…PDTN). Residues 243-260 (TTTTNPTTSSNSKVVTPT) are compositionally biased toward low complexity. Positions 261 to 288 (GSDHSPASHNGGSLSSGKPQLLNDSVPA) are enriched in polar residues. A compositionally biased stretch (low complexity) spans 306–322 (SQQISSSSPQNSSPTTT). 3 stretches are compositionally biased toward polar residues: residues 323–335 (GHSP…SSKQ), 902–913 (RLNADNPTTDTN), and 931–942 (SSDTPTNKPKFN). The segment covering 943–954 (STSSIPTATPTS) has biased composition (low complexity).

The protein localises to the nucleus. Functionally, putative transcription factor. Suppresses the lethal phenotype of RPM2 deletion. The sequence is that of Putative transcription factor SEF1 (SEF1) from Kluyveromyces lactis (strain ATCC 8585 / CBS 2359 / DSM 70799 / NBRC 1267 / NRRL Y-1140 / WM37) (Yeast).